We begin with the raw amino-acid sequence, 234 residues long: MGGCVGTHHDSSGSLNENSDGTGVALGRNQPLKKDKPKWKSDYPMTDGQLRSKRDEFWDTAPAFEGRKEIWDALKAAAHAFESNDHELAQAIIDGASITLPHGALTECYDELGNRYQLPVYCLAPPINMIEEKSDSETLDIPEPPPNSGHECQLRLRLSTGKDLRLMVRSADTVYHMKRRLHAAEGVEPASQRWFFSGRPLTDKMRLEELKIPKDFVVQVIVSQPIPNPTPVEN.

The interval 1 to 47 (MGGCVGTHHDSSGSLNENSDGTGVALGRNQPLKKDKPKWKSDYPMTD) is disordered. Residues 12 to 21 (SGSLNENSDG) are compositionally biased toward polar residues. The span at 32–41 (LKKDKPKWKS) shows a compositional bias: basic and acidic residues. A Ubiquitin-like domain is found at 152–227 (CQLRLRLSTG…VQVIVSQPIP (76 aa)).

Functionally, may be involved in the regulation of cellular senescence through a positive feedback loop with TP53. This is Ubiquitin domain-containing protein 1 (ubtd1) from Xenopus laevis (African clawed frog).